A 205-amino-acid chain; its full sequence is Pyrrolidone-carboxylate peptidase (205 aa).

Catalysis depends on residues E78, C141, and H165.

It belongs to the peptidase C15 family. Homotetramer.

Its subcellular location is the cytoplasm. The enzyme catalyses Release of an N-terminal pyroglutamyl group from a polypeptide, the second amino acid generally not being Pro.. Functionally, removes 5-oxoproline from various penultimate amino acid residues except L-proline. This chain is Pyrrolidone-carboxylate peptidase, found in Thermosipho africanus (strain TCF52B).